The following is a 316-amino-acid chain: Protein U25 (316 aa).

This sequence belongs to the herpesviridae US22 family.

The sequence is that of Protein U25 (U25) from Human herpesvirus 6B (HHV-6 variant B).